We begin with the raw amino-acid sequence, 637 residues long: Chaperone protein DnaK (637 aa).

Threonine 196 carries the post-translational modification Phosphothreonine; by autocatalysis. 2 disordered regions span residues 503 to 525 and 598 to 637; these read AEIN…RKEE and SGAG…DDKK. The span at 598–619 shows a compositional bias: low complexity; it reads SGAGAAQAQPEAPQNSGSSQSS.

This sequence belongs to the heat shock protein 70 family.

Acts as a chaperone. The sequence is that of Chaperone protein DnaK from Chlorobium chlorochromatii (strain CaD3).